A 397-amino-acid chain; its full sequence is Putative serine/threonine-protein kinase R301 (397 aa).

One can recognise a Protein kinase domain in the interval 25-397; sequence QIKSTSVGSG…IIRHFNSPRL (373 aa). ATP is bound by residues 31 to 39 and Lys-53; that span reads VGSGGSDNI. The active-site Proton acceptor is the Asp-218.

It belongs to the protein kinase superfamily. Ser/Thr protein kinase family.

The protein localises to the virion. The catalysed reaction is L-seryl-[protein] + ATP = O-phospho-L-seryl-[protein] + ADP + H(+). The enzyme catalyses L-threonyl-[protein] + ATP = O-phospho-L-threonyl-[protein] + ADP + H(+). The sequence is that of Putative serine/threonine-protein kinase R301 from Acanthamoeba polyphaga (Amoeba).